Consider the following 285-residue polypeptide: Type II secretion system protein C (285 aa).

At 1–27 (MSKGIKMHNSVMRLTIPNKKIINYAPH) the chain is on the cytoplasmic side. A helical membrane pass occupies residues 28 to 46 (IVTSIILFFICQQLAQLTW). Over 47–285 (KIILPVNFTD…NDIYLALRDE (239 aa)) the chain is Periplasmic.

This sequence belongs to the GSP C family.

The protein resides in the cell inner membrane. In terms of biological role, involved in a type II secretion system (T2SS, formerly general secretion pathway, GSP) for the export of proteins. Required for the translocation of pullulanase. The sequence is that of Type II secretion system protein C (pulC) from Klebsiella pneumoniae.